A 336-amino-acid chain; its full sequence is Alpha-N-acetylgalactosaminide alpha-2,6-sialyltransferase 5 (336 aa).

At 1–8 the chain is on the cytoplasmic side; it reads MKTLMRHG. The helical; Signal-anchor for type II membrane protein transmembrane segment at 9-29 threads the bilayer; that stretch reads LAVCLVLTTMCTSLLLVYSSL. Over 30-336 the chain is Lumenal; the sequence is GSQKERPPQQ…VNHAEGKPVF (307 aa). Positions 34-76 are disordered; that stretch reads ERPPQQQQQQQQQQQQAATATGSTQLVESSPQPRRTAPAGPRQ. The span at 38–49 shows a compositional bias: low complexity; sequence QQQQQQQQQQQQ. Positions 50 to 66 are enriched in polar residues; that stretch reads AATATGSTQLVESSPQP. C96 and C245 are disulfide-bonded. 2 N-linked (GlcNAc...) asparagine glycosylation sites follow: N137 and N161.

The protein belongs to the glycosyltransferase 29 family. High expression in forebrain and to a lesser extent in cerebellum. No expression in salivary gland, intestine, liver, kidney, heart, lung, thymus and spleen.

It localises to the golgi apparatus membrane. It carries out the reaction a ganglioside GM1b (d18:1(4E)) + CMP-N-acetyl-beta-neuraminate = a ganglioside GD1alpha (d18:1(4E)) + CMP + H(+). The catalysed reaction is N-acetyl-alpha-neuraminosyl-(2-&gt;3)-beta-D-galactosyl-(1-&gt;3)-N-acetyl-beta-D-glucosaminyl-(1-&gt;3)-beta-D-galactosyl-(1-&gt;4)-beta-D-glucosyl-(1&lt;-&gt;1')-N-acyl-sphing-4-enine + CMP-N-acetyl-beta-neuraminate = N-acetyl-alpha-neuraminosyl-(2-&gt;3)-beta-D-galactosyl-(1-&gt;3)-[N-acetyl-alpha-neuraminosyl-(2-&gt;6)]-N-acetyl-beta-D-glucosaminyl-(1-&gt;3)-beta-D-galactosyl-(1-&gt;4)-beta-D-glucosyl-(1&lt;-&gt;1')-N-acyl-sphing-4-enine + CMP + H(+). The protein operates within glycolipid biosynthesis. Its function is as follows. Predominantly catalyzes the biosynthesis of ganglioside GD1alpha from GM1b in the brain, by transferring the sialyl group (N-acetyl-alpha-neuraminyl or NeuAc) from CMP-NeuAc to the GalNAc residue on the NeuAc-alpha-2,3-Gal-beta-1,3-GalNAc sequence of GM1b. GD1alpha is a critical molecule in the communication and interaction between neuronal cells and their supportive cells, particularly in brain tissues, and functions as an adhesion molecule in the process of metastasis. Also shows activity towards sialyl Lc4Cer (N-acetyl-alpha-neuraminosyl-(2-&gt;3)-beta-D-galactosyl-(1-&gt;3)-N-acetyl-beta-D-glucosaminyl-(1-&gt;3)-beta-D-galactosyl-(1-&gt;4)-beta-D-glucosyl-(1&lt;-&gt;1')-N-acyl-sphing-4-enine) generating disialyl Lc4Cer, which can lead to the synthesis of disialyl Lewis a (Le(a)), suggested to be a cancer-associated antigen. The protein is Alpha-N-acetylgalactosaminide alpha-2,6-sialyltransferase 5 (St6galnac5) of Mus musculus (Mouse).